A 1233-amino-acid chain; its full sequence is Structural maintenance of chromosomes protein 1A (1233 aa).

32–39 provides a ligand contact to ATP; it reads GPNGSGKS. 2 coiled-coil regions span residues 104 to 124 and 163 to 503; these read EYKINNKVVQLHEYSEELEKL and ELAQ…KAEI. A compositionally biased stretch (basic and acidic residues) spans 284-293; that stretch reads IKEKDSELNQ. Disordered stretches follow at residues 284-308 and 348-369; these read IKEKDSELNQKRPQYIKAKENTSHK and QEFEERMEEESQSQGRDLTLEE. Residues Ser358 and Ser360 each carry the phosphoserine modification. An SMC hinge domain is found at 515-629; the sequence is VYGRLIDLCQ…DNVEDARRIA (115 aa). N6-acetyllysine occurs at positions 648 and 713. Positions 660 to 935 form a coiled coil; that stretch reads KAKARRWDEK…RHNLLQACKM (276 aa). A disordered region spans residues 947–968; sequence MDDISQEEGSSQGEDSVSGSQR. Residues 953 to 967 show a composition bias toward low complexity; the sequence is EEGSSQGEDSVSGSQ. Phosphoserine is present on residues Ser957, Ser962, Ser966, and Ser970. The stretch at 991–1068 forms a coiled coil; that stretch reads KDAQAEEEIK…FEQIKKERFD (78 aa). An N6-acetyllysine modification is found at Lys1037.

It belongs to the SMC family. SMC1 subfamily. Forms a heterodimer with SMC3 in cohesin complexes. Cohesin complexes are composed of the SMC1 (SMC1A or meiosis-specific SMC1B) and SMC3 heterodimer attached via their SMC hinge domain, RAD21 which link them, and one STAG protein (STAG1, STAG2 or meiosis-specific STAG3), which interacts with RAD21. In germ cell cohesin complexes, SMC1A is mutually exclusive with SMC1B. Found in a complex with CDCA5, SMC3 and RAD21, PDS5A/SCC-112 and PDS5B/APRIN. Interacts with NDC80, SYCP2, STAG3, BRCA1 and BRAT1. The cohesin complex interacts with the cohesin loading complex subunits NIPBL/Scc2 (via HEAT repeats) and MAU2/Scc4. NIPBL directly contacts all members of the complex, RAD21, SMC1A/B, SMC3 and STAG1. Interacts with RPGR. Found in a complex containing POLE and SMC3. Post-translationally, phosphorylated upon ionizing radiation or DNA methylation. Phosphorylation of Ser-957 and Ser-966 activates it and is required for S-phase checkpoint activation. Ubiquitinated by the DCX(DCAF15) complex, leading to its degradation.

The protein localises to the nucleus. It is found in the chromosome. It localises to the centromere. Functionally, involved in chromosome cohesion during cell cycle and in DNA repair. Involved in DNA repair via its interaction with BRCA1 and its related phosphorylation by ATM, and works as a downstream effector in the ATM/NBS1 branch of S-phase checkpoint. Central component of cohesin complex. The cohesin complex is required for the cohesion of sister chromatids after DNA replication. The cohesin complex apparently forms a large proteinaceous ring within which sister chromatids can be trapped. At anaphase, the complex is cleaved and dissociates from chromatin, allowing sister chromatids to segregate. The cohesin complex may also play a role in spindle pole assembly during mitosis. Involved in DNA repair via its interaction with BRCA1 and its related phosphorylation by ATM, or via its phosphorylation by ATR. Works as a downstream effector both in the ATM/NBS1 branch and in the ATR/MSH2 branch of S-phase checkpoint. The sequence is that of Structural maintenance of chromosomes protein 1A (SMC1A) from Bos taurus (Bovine).